The following is a 107-amino-acid chain: UPF0145 protein BVU_2335 (107 aa).

The protein belongs to the UPF0145 family.

The polypeptide is UPF0145 protein BVU_2335 (Phocaeicola vulgatus (strain ATCC 8482 / DSM 1447 / JCM 5826 / CCUG 4940 / NBRC 14291 / NCTC 11154) (Bacteroides vulgatus)).